The following is a 513-amino-acid chain: GMP synthase [glutamine-hydrolyzing] (513 aa).

In terms of domain architecture, Glutamine amidotransferase type-1 spans 3–200 (SVLVLDFGSQ…LIDIAGITPD (198 aa)). Residue cysteine 80 is the Nucleophile of the active site. Residues histidine 174 and glutamate 176 contribute to the active site. The region spanning 201–388 (WSPKHFIDHQ…LGIAEDILMR (188 aa)) is the GMPS ATP-PPase domain. Residue 228 to 234 (SGGVDSS) participates in ATP binding.

Homodimer.

The catalysed reaction is XMP + L-glutamine + ATP + H2O = GMP + L-glutamate + AMP + diphosphate + 2 H(+). It functions in the pathway purine metabolism; GMP biosynthesis; GMP from XMP (L-Gln route): step 1/1. In terms of biological role, catalyzes the synthesis of GMP from XMP. This is GMP synthase [glutamine-hydrolyzing] from Chlorobium limicola (strain DSM 245 / NBRC 103803 / 6330).